A 277-amino-acid polypeptide reads, in one-letter code: 4-hydroxy-3-methylbut-2-enyl diphosphate reductase (277 aa).

Cysteine 12 serves as a coordination point for [4Fe-4S] cluster. (2E)-4-hydroxy-3-methylbut-2-enyl diphosphate-binding residues include histidine 36 and histidine 70. The dimethylallyl diphosphate site is built by histidine 36 and histidine 70. Histidine 36 and histidine 70 together coordinate isopentenyl diphosphate. Cysteine 92 lines the [4Fe-4S] cluster pocket. (2E)-4-hydroxy-3-methylbut-2-enyl diphosphate is bound at residue histidine 120. Residue histidine 120 participates in dimethylallyl diphosphate binding. Isopentenyl diphosphate is bound at residue histidine 120. The active-site Proton donor is the glutamate 122. Threonine 158 is a binding site for (2E)-4-hydroxy-3-methylbut-2-enyl diphosphate. [4Fe-4S] cluster is bound at residue cysteine 186. Residues serine 214, asparagine 216, and serine 258 each coordinate (2E)-4-hydroxy-3-methylbut-2-enyl diphosphate. Serine 214, asparagine 216, and serine 258 together coordinate dimethylallyl diphosphate. Residues serine 214, asparagine 216, and serine 258 each coordinate isopentenyl diphosphate.

Belongs to the IspH family. [4Fe-4S] cluster is required as a cofactor.

It carries out the reaction isopentenyl diphosphate + 2 oxidized [2Fe-2S]-[ferredoxin] + H2O = (2E)-4-hydroxy-3-methylbut-2-enyl diphosphate + 2 reduced [2Fe-2S]-[ferredoxin] + 2 H(+). The catalysed reaction is dimethylallyl diphosphate + 2 oxidized [2Fe-2S]-[ferredoxin] + H2O = (2E)-4-hydroxy-3-methylbut-2-enyl diphosphate + 2 reduced [2Fe-2S]-[ferredoxin] + 2 H(+). Its pathway is isoprenoid biosynthesis; dimethylallyl diphosphate biosynthesis; dimethylallyl diphosphate from (2E)-4-hydroxy-3-methylbutenyl diphosphate: step 1/1. The protein operates within isoprenoid biosynthesis; isopentenyl diphosphate biosynthesis via DXP pathway; isopentenyl diphosphate from 1-deoxy-D-xylulose 5-phosphate: step 6/6. Its function is as follows. Catalyzes the conversion of 1-hydroxy-2-methyl-2-(E)-butenyl 4-diphosphate (HMBPP) into a mixture of isopentenyl diphosphate (IPP) and dimethylallyl diphosphate (DMAPP). Acts in the terminal step of the DOXP/MEP pathway for isoprenoid precursor biosynthesis. The polypeptide is 4-hydroxy-3-methylbut-2-enyl diphosphate reductase (Campylobacter jejuni subsp. jejuni serotype O:2 (strain ATCC 700819 / NCTC 11168)).